The following is a 401-amino-acid chain: Methyltransferase cfoC (401 aa).

S-adenosyl-L-methionine is bound at residue Asp268. The active-site Proton acceptor is His308.

It belongs to the class I-like SAM-binding methyltransferase superfamily. Cation-independent O-methyltransferase family.

Its pathway is secondary metabolite biosynthesis; flavonoid biosynthesis. Its function is as follows. Methyltransferase; part of the gene cluster that mediates the biosynthesis of chlorflavonin, a fungal flavonoid with acetolactate synthase inhibitory activity. Within the pathway, cfoC is responsible for the methylation at position C8-OH of flavonoid. The pathway begins with the PKS-NRPS hybrid synthetase cfoA that uses benzoic acid or p-hydroxybenzoic acid as a starter unit with four rounds of chain elongation using malonyl-CoA to form the chalcone skeleton. Then, a new type of chalcone isomerase, cfoK, catalyzes the conversion of the chalcone into a flavanone by a histidine-mediated oxa-Michael addition mechanism. The desaturation of flavanone to flavone is catalyzed by a new type of flavone synthase, the flavin mononucleotide (FMN)-dependent oxidoreductase cfoJ. Monooxygenases cfoF, cfoG, and P450 cfoH are responsible for the hydroxylation of the flavonoid skeleton at sites C3, C8, and C2', respectively. Like cfoF, the dehydratase cfoI also plays a role in the hydroxylation of position C3. Methyltransferases cfoB, cfoC, and cfoD then catalyze the methylation of C7-OH, C8-OH, and C3-OH, respectively. Finally, the monooxygenase cfoE is responsible for the chlorination of flavonoid at position C3'. The sequence is that of Methyltransferase cfoC from Aspergillus candidus.